We begin with the raw amino-acid sequence, 204 residues long: Allurin (204 aa).

Positions 1–19 (MDTFNFIICISALFHSTYG) are cleaved as a signal peptide. The region spanning 36-138 (VDLHNLLRRS…DKMIGHYTQV (103 aa)) is the SCP domain. The chain crosses the membrane as a helical span at residues 140 to 161 (WAKTYLLGCGLAFCPGNYYPYV).

The protein belongs to the CRISP family. In terms of tissue distribution, expressed only in oviduct.

It is found in the membrane. It localises to the secreted. Functionally, involved in sperm chemoattraction. This Xenopus tropicalis (Western clawed frog) protein is Allurin (crisp-a).